Here is a 219-residue protein sequence, read N- to C-terminus: Probable N-acetyltransferase camello (219 aa).

Transmembrane regions (helical) follow at residues 44–64 and 66–86; these read FITFVAFTSVFMGTGSYVLAL and SLVALLAAGWYGLYSEFHGLA. Residues 62 to 211 enclose the N-acetyltransferase domain; it reads LALTSLVALL…VHQYTSFTVA (150 aa).

Belongs to the camello family.

It is found in the golgi apparatus membrane. In terms of biological role, plays a role in regulation of gastrulation, possibly by controlled reduction of cell adhesion in the periblastopore region which is necessary for optimal cell motility. In Xenopus tropicalis (Western clawed frog), this protein is Probable N-acetyltransferase camello.